Reading from the N-terminus, the 613-residue chain is tRNA 5-methylaminomethyl-2-thiouridine biosynthesis bifunctional protein MnmC (613 aa).

Positions 1-225 (MKKAKLIFKD…KREMIKAYLE (225 aa)) are tRNA (mnm(5)s(2)U34)-methyltransferase. Positions 252 to 613 (IGAGISSAVL…FLIRKLKKGL (362 aa)) are FAD-dependent cmnm(5)s(2)U34 oxidoreductase.

This sequence in the N-terminal section; belongs to the methyltransferase superfamily. tRNA (mnm(5)s(2)U34)-methyltransferase family. The protein in the C-terminal section; belongs to the DAO family. It depends on FAD as a cofactor.

Its subcellular location is the cytoplasm. The catalysed reaction is 5-aminomethyl-2-thiouridine(34) in tRNA + S-adenosyl-L-methionine = 5-methylaminomethyl-2-thiouridine(34) in tRNA + S-adenosyl-L-homocysteine + H(+). Functionally, catalyzes the last two steps in the biosynthesis of 5-methylaminomethyl-2-thiouridine (mnm(5)s(2)U) at the wobble position (U34) in tRNA. Catalyzes the FAD-dependent demodification of cmnm(5)s(2)U34 to nm(5)s(2)U34, followed by the transfer of a methyl group from S-adenosyl-L-methionine to nm(5)s(2)U34, to form mnm(5)s(2)U34. The sequence is that of tRNA 5-methylaminomethyl-2-thiouridine biosynthesis bifunctional protein MnmC from Campylobacter jejuni (strain RM1221).